A 343-amino-acid polypeptide reads, in one-letter code: MENAYSKAGVNVEAGYEVVERIQKHSQKTQRTGTLGMLGGFGGCFDLSSYKLKEPVLVSGTDGVGTKLLLAIEEQKHETIGIDCVAMCVNDVVAQGAEPLYFLDYLALGTVNPAKVEAIVAGVAAGCCEANAALIGGETAEMPDMYEADAYDVAGFAVGIAEKSQLLTPSNVKEGDFLIGLPSSGLHSNGYSLVRNIFFKKHSFKTTDKLPELAPKTLGEELLTPTKIYVKELLPLLKAGLVHGAAHITGGGFLENLPRMFSSALAAEIQLNSWPVLPIFKLIQKYGEIPPEEMYEIFNMGLGMILAVSPEHVEKVQELLPEAFEIGRLVPRKTKAVIFKEAL.

This sequence belongs to the AIR synthase family.

Its subcellular location is the cytoplasm. The catalysed reaction is 2-formamido-N(1)-(5-O-phospho-beta-D-ribosyl)acetamidine + ATP = 5-amino-1-(5-phospho-beta-D-ribosyl)imidazole + ADP + phosphate + H(+). It functions in the pathway purine metabolism; IMP biosynthesis via de novo pathway; 5-amino-1-(5-phospho-D-ribosyl)imidazole from N(2)-formyl-N(1)-(5-phospho-D-ribosyl)glycinamide: step 2/2. This Enterococcus faecalis (strain ATCC 700802 / V583) protein is Phosphoribosylformylglycinamidine cyclo-ligase.